A 266-amino-acid chain; its full sequence is Large ribosomal subunit protein eL8 (266 aa).

Residues 1 to 11 show a composition bias toward basic residues; that stretch reads MPKGKKAKGKK. Disordered regions lie at residues 1-28 and 105-134; these read MPKGKKAKGKKVAPAPSVAKKHEAKKVV and ETKQEKKKRLLARAEQKAAGKGDAPTKRPP. The span at 116–130 shows a compositional bias: basic and acidic residues; it reads ARAEQKAAGKGDAPT.

This sequence belongs to the eukaryotic ribosomal protein eL8 family. Component of the large ribosomal subunit.

It is found in the cytoplasm. Functionally, component of the large ribosomal subunit. The ribosome is a large ribonucleoprotein complex responsible for the synthesis of proteins in the cell. This is Large ribosomal subunit protein eL8 (rpl7a) from Takifugu rubripes (Japanese pufferfish).